A 312-amino-acid polypeptide reads, in one-letter code: Borealin-2 (312 aa).

Basic residues predominate over residues methionine 1 to arginine 10. The disordered stretch occupies residues methionine 1 to glutamine 26. Residues arginine 11–glutamine 26 are compositionally biased toward basic and acidic residues.

The protein belongs to the borealin family. In terms of assembly, component of the CPC complex.

Its subcellular location is the nucleus. The protein localises to the chromosome. It is found in the centromere. In terms of biological role, component of the chromosomal passenger complex (CPC), a complex that acts as a key regulator of mitosis. The CPC complex has essential functions at the centromere in ensuring correct chromosome alignment and segregation and is required for chromatin-induced microtubule stabilization and spindle assembly. The chain is Borealin-2 from Gallus gallus (Chicken).